The sequence spans 318 residues: uncharacterized protein (318 aa).

2 consecutive transmembrane segments (helical) span residues valine 230–isoleucine 250 and alanine 264–isoleucine 284.

Belongs to the glycosyltransferase 2 family. GtrB subfamily.

Its subcellular location is the cell membrane. This is an uncharacterized protein from Synechocystis sp. (strain ATCC 27184 / PCC 6803 / Kazusa).